A 235-amino-acid chain; its full sequence is Class A basic helix-loop-helix protein 9 (235 aa).

2 disordered regions span residues 1–69 (MLRG…RRMA) and 132–235 (GHLE…HPRS). The segment covering 55-67 (RRRARPVRSKARR) has biased composition (basic residues). Positions 65-117 (ARRMAANVRERKRILDYNEAFNALRRALRHDLGGKRLSKIATLRRAIHRIAAL) constitute a bHLH domain.

In terms of assembly, heterodimer. Efficient DNA binding requires dimerization with another bHLH protein. Interacts with TCF3, TCF4, and TCF12.

It is found in the nucleus. The protein resides in the cytoplasm. In terms of biological role, transcription factor, which play a role in limb development. Is an essential player in the regulatory network governing transcription of genes implicated in limb morphogenesis. This chain is Class A basic helix-loop-helix protein 9 (BHLHA9), found in Homo sapiens (Human).